A 410-amino-acid chain; its full sequence is UDP-N-acetylglucosamine--N-acetylmuramyl-(pentapeptide) pyrophosphoryl-undecaprenol N-acetylglucosamine transferase (410 aa).

Residues 1 to 34 form a disordered region; sequence MKDTVSQPAGGRGATAPRPADAASPSCGSSPSAD. Residues 14 to 34 show a composition bias toward low complexity; the sequence is ATAPRPADAASPSCGSSPSAD. Residues 45–47, Asn167, Arg204, Ser238, and Gln334 each bind UDP-N-acetyl-alpha-D-glucosamine; that span reads TAG.

It belongs to the glycosyltransferase 28 family. MurG subfamily.

It localises to the cell membrane. It carries out the reaction di-trans,octa-cis-undecaprenyl diphospho-N-acetyl-alpha-D-muramoyl-L-alanyl-D-glutamyl-meso-2,6-diaminopimeloyl-D-alanyl-D-alanine + UDP-N-acetyl-alpha-D-glucosamine = di-trans,octa-cis-undecaprenyl diphospho-[N-acetyl-alpha-D-glucosaminyl-(1-&gt;4)]-N-acetyl-alpha-D-muramoyl-L-alanyl-D-glutamyl-meso-2,6-diaminopimeloyl-D-alanyl-D-alanine + UDP + H(+). It functions in the pathway cell wall biogenesis; peptidoglycan biosynthesis. Functionally, cell wall formation. Catalyzes the transfer of a GlcNAc subunit on undecaprenyl-pyrophosphoryl-MurNAc-pentapeptide (lipid intermediate I) to form undecaprenyl-pyrophosphoryl-MurNAc-(pentapeptide)GlcNAc (lipid intermediate II). This chain is UDP-N-acetylglucosamine--N-acetylmuramyl-(pentapeptide) pyrophosphoryl-undecaprenol N-acetylglucosamine transferase, found in Mycobacterium bovis (strain ATCC BAA-935 / AF2122/97).